The following is a 345-amino-acid chain: Opioid-binding protein/cell adhesion molecule (345 aa).

Residues 1–27 (MGVCGSLFQPWKCLVVVSLRLLFLVPT) form the signal peptide. Ig-like C2-type domains are found at residues 39–126 (PKAM…PKTS), 136–219 (PQIM…VKIT), and 223–310 (PPYI…ASIT). N-linked (GlcNAc...) asparagine glycans are attached at residues asparagine 44, asparagine 70, and asparagine 140. Cysteine 57 and cysteine 115 are oxidised to a cystine. Disulfide bonds link cysteine 157-cysteine 202 and cysteine 244-cysteine 296. Residues asparagine 285, asparagine 293, and asparagine 306 are each glycosylated (N-linked (GlcNAc...) asparagine). Asparagine 322 carries GPI-anchor amidated asparagine lipidation. The propeptide at 323–345 (SASRALACLWLSGTLFAHFFIKF) is removed in mature form.

This sequence belongs to the immunoglobulin superfamily. IgLON family.

Its subcellular location is the cell membrane. Binds opioids in the presence of acidic lipids; probably involved in cell contact. The polypeptide is Opioid-binding protein/cell adhesion molecule (OPCML) (Bos taurus (Bovine)).